The sequence spans 184 residues: Peptide deformylase (184 aa).

2 residues coordinate Fe cation: C98 and H140. Residue E141 is part of the active site. Fe cation is bound at residue H144.

It belongs to the polypeptide deformylase family. It depends on Fe(2+) as a cofactor.

The enzyme catalyses N-terminal N-formyl-L-methionyl-[peptide] + H2O = N-terminal L-methionyl-[peptide] + formate. Functionally, removes the formyl group from the N-terminal Met of newly synthesized proteins. Requires at least a dipeptide for an efficient rate of reaction. N-terminal L-methionine is a prerequisite for activity but the enzyme has broad specificity at other positions. The chain is Peptide deformylase from Bacteroides fragilis (strain ATCC 25285 / DSM 2151 / CCUG 4856 / JCM 11019 / LMG 10263 / NCTC 9343 / Onslow / VPI 2553 / EN-2).